Consider the following 185-residue polypeptide: Ribosome-recycling factor (185 aa).

This sequence belongs to the RRF family.

The protein resides in the cytoplasm. Its function is as follows. Responsible for the release of ribosomes from messenger RNA at the termination of protein biosynthesis. May increase the efficiency of translation by recycling ribosomes from one round of translation to another. The polypeptide is Ribosome-recycling factor (Streptococcus gordonii (strain Challis / ATCC 35105 / BCRC 15272 / CH1 / DL1 / V288)).